A 500-amino-acid chain; its full sequence is Probable malate:quinone oxidoreductase (500 aa).

This sequence belongs to the MQO family. FAD serves as cofactor.

The enzyme catalyses (S)-malate + a quinone = a quinol + oxaloacetate. Its pathway is carbohydrate metabolism; tricarboxylic acid cycle; oxaloacetate from (S)-malate (quinone route): step 1/1. The polypeptide is Probable malate:quinone oxidoreductase (Prochlorococcus marinus (strain MIT 9211)).